The chain runs to 87 residues: Putative defensin-like protein 84 (87 aa).

Residues 1–27 form the signal peptide; sequence MTTKMVSSHRLLTLMVFALLLIPMISG. 4 cysteine pairs are disulfide-bonded: Cys-32-Cys-73, Cys-36-Cys-54, Cys-42-Cys-71, and Cys-46-Cys-72.

Belongs to the DEFL family.

Its subcellular location is the secreted. This Arabidopsis thaliana (Mouse-ear cress) protein is Putative defensin-like protein 84.